Reading from the N-terminus, the 368-residue chain is Mitogen-activated protein kinase KSS1 (368 aa).

A Protein kinase domain is found at 13-313; sequence YKLVDLIGEG…AAEALRHPYL (301 aa). Residues 19–27 and Lys-42 contribute to the ATP site; that span reads IGEGAYGTV. Asp-143 (proton acceptor) is an active-site residue. Thr-183 is subject to Phosphothreonine. The short motif at 183–185 is the TXY element; the sequence is TEY. Tyr-185 is subject to Phosphotyrosine.

This sequence belongs to the protein kinase superfamily. Ser/Thr protein kinase family. MAP kinase subfamily. HOG1 sub-subfamily. In terms of assembly, in the nucleus, KSS1 forms a complex with DIG1, DIG2 and STE12; in contrast to FUS3 the interaction of KSS1 with STE12 does not depend on DIG1 and DIG2. Phosphorylated KSS1 shows reduced interaction with STE12. During pheromone activation and phosphorylation, KSS1 forms a membrane-associated complex with the scaffold protein STE5, the MAPKK STE7, the MAPKKK STE11, and the G-protein beta subunit GBB/STE4; interacting directly with POF1, STE7 and STE5 proteins. The cofactor is Mg(2+). Post-translationally, dually phosphorylated on Thr-183 and Tyr-185 by STE7 in response to pheromone or carbon/nitrogen limitation, which activates the enzyme. Activated FUS3 down-regulates KSS1 phosphorylation.

Its subcellular location is the nucleus. It localises to the cytoplasm. It is found in the periplasm. It catalyses the reaction L-seryl-[protein] + ATP = O-phospho-L-seryl-[protein] + ADP + H(+). The catalysed reaction is L-threonyl-[protein] + ATP = O-phospho-L-threonyl-[protein] + ADP + H(+). Its activity is regulated as follows. Activated by tyrosine and threonine phosphorylation after pheromone treatment or carbon/nitrogen limitation. Its function is as follows. Together with closely related FUS3, KSS1 is the final kinase in the signal transduction cascade regulating activation/repression of the mating and filamentation pathways, induced by pheromone and nitrogen/carbon limitation, respectively. Phosphorylated KSS1 activates both pathways, whereas activated FUS3 activates the mating but suppresses the filamentation pathway. KSS1 activity is down-regulated by FUS3 during pheromone induction to prevent inappropriate activation of the filamentation pathway. During induction of filamentation, KSS1 activates the transcription factor STE12 resulting in its binding to and activation of filamentation specific genes. Non-activated KSS1 has a kinase-independent repressive effect on STE12 transcriptional activity, that is mediated by direct binding to STE12 and depends on the presence of DIG1 and DIG2, and that is required for the suppression of filamentation under normal growth conditions. SSN3/SRB10 contributes further to the suppression of filamentation under these conditions by reducing STE12 stability independent of KSS1. FUS3 can partially compensate for the lack of KSS1 but filamentation becomes constitutively induced at a low level in the absence of any signal. KSS1 phosphorylates STE7, STE5, FAR1, DIG1, DIG2, STE12, and SST2. This chain is Mitogen-activated protein kinase KSS1 (KSS1), found in Saccharomyces cerevisiae (strain ATCC 204508 / S288c) (Baker's yeast).